The chain runs to 208 residues: Uridine kinase (208 aa).

An ATP-binding site is contributed by 11–18 (GGTGSGKS).

This sequence belongs to the uridine kinase family.

The protein resides in the cytoplasm. The catalysed reaction is uridine + ATP = UMP + ADP + H(+). The enzyme catalyses cytidine + ATP = CMP + ADP + H(+). It participates in pyrimidine metabolism; CTP biosynthesis via salvage pathway; CTP from cytidine: step 1/3. The protein operates within pyrimidine metabolism; UMP biosynthesis via salvage pathway; UMP from uridine: step 1/1. In Alkaliphilus metalliredigens (strain QYMF), this protein is Uridine kinase.